The sequence spans 205 residues: Transcriptional regulatory protein PdtaR (205 aa).

One can recognise a Response regulatory domain in the interval 15-129; it reads RVLIAEDEAL…DLIPAIELAV (115 aa). Residue Asp-65 is modified to 4-aspartylphosphate. Positions 135–196 constitute an ANTAR domain; that stretch reads ITALEGEVAT…TMKRVAEVVL (62 aa).

Post-translationally, phosphorylated and activated by PdtaS.

Its subcellular location is the cytoplasm. Functionally, member of the two-component regulatory system PdtaR/PdtaS. This two-component system plays an essential role in mycobacterial adaptation to poor nutrient conditions. PdtaR probably acts at the level of transcriptional antitermination rather than transcriptional initiation. In terms of biological role, in addition, the PdtaR/PdtaS two-component system controls copper and nitric oxide (NO) resistance downstream of the intramembrane protease Rip1. This coupled Rip1/PdtaS/PdtaR circuit controls NO resistance and acute lung infection in mice by relieving PdtaR/PdtaS-mediated repression of isonitrile chalkophore biosynthesis. Two signals are required to fully inactivate the PdtaR/PdtaS system and mediate NO resistance: a cytoplasmic inhibitory signal through the PdtaS kinase mediated by direct sensing of NO and the production of PPE1-5', an NO-induced small RNA, to sequester PdtaR. In Mycobacterium tuberculosis (strain CDC 1551 / Oshkosh), this protein is Transcriptional regulatory protein PdtaR (pdtaR).